Consider the following 348-residue polypeptide: 11-beta-hydroxysteroid dehydrogenase A (348 aa).

A helical; Signal-anchor for type II membrane protein membrane pass occupies residues 10–30 (LIAPPFTFFFLLFFLPPFQIF). The Proline-knob motif lies at 13–26 (PPFTFFFLLFFLPP). Residues 54–80 (GASS…AARR), aspartate 105, and 132–135 (NAGI) each bind NADP(+). Residue serine 184 coordinates substrate. Catalysis depends on tyrosine 197, which acts as the Proton acceptor. NADP(+) contacts are provided by residues 197 to 201 (YNASK) and lysine 201.

Belongs to the short-chain dehydrogenases/reductases (SDR) family. As to expression, expressed in seeds (at protein level). Not expressed in stem, leaf or root (at protein level).

The protein resides in the lipid droplet. The protein localises to the membrane. It carries out the reaction an 11beta-hydroxysteroid + NADP(+) = an 11-oxosteroid + NADPH + H(+). It catalyses the reaction an 11beta-hydroxysteroid + NAD(+) = an 11-oxosteroid + NADH + H(+). The catalysed reaction is corticosterone + NADP(+) = 11-dehydrocorticosterone + NADPH + H(+). The enzyme catalyses corticosterone + NAD(+) = 11-dehydrocorticosterone + NADH + H(+). It carries out the reaction 17beta-estradiol + NADP(+) = estrone + NADPH + H(+). It catalyses the reaction 17beta-estradiol + NAD(+) = estrone + NADH + H(+). Has dehydrogenase activity against corticosterone (11 beta-hydroxysteroid) and estradiol (17 beta-hydroxysteroid), with higher activity against estradiol. Possesses higher dehydrogenase activity with NADP(+) than NAD(+) regardless of the sterol substrate. May be involved in signal transduction regulated by various sterols. In Sesamum indicum (Oriental sesame), this protein is 11-beta-hydroxysteroid dehydrogenase A.